The following is a 282-amino-acid chain: Leucine-rich protein (282 aa).

Its function is as follows. Not essential for viability or growth. Nevertheless, uncontrolled production in E.coli is detrimental to the normal physiology of the bacteria. This Streptococcus dysgalactiae subsp. equisimilis (Streptococcus equisimilis) protein is Leucine-rich protein (lrp).